Reading from the N-terminus, the 216-residue chain is Imidazoleglycerol-phosphate dehydratase (216 aa).

This sequence belongs to the imidazoleglycerol-phosphate dehydratase family.

The protein localises to the cytoplasm. The catalysed reaction is D-erythro-1-(imidazol-4-yl)glycerol 3-phosphate = 3-(imidazol-4-yl)-2-oxopropyl phosphate + H2O. Its pathway is amino-acid biosynthesis; L-histidine biosynthesis; L-histidine from 5-phospho-alpha-D-ribose 1-diphosphate: step 6/9. The protein is Imidazoleglycerol-phosphate dehydratase of Nocardia farcinica (strain IFM 10152).